We begin with the raw amino-acid sequence, 654 residues long: Probable Xaa-Pro aminopeptidase P (654 aa).

Residues Asp449, Asp460, Glu558, and Glu572 each contribute to the Mn(2+) site.

This sequence belongs to the peptidase M24B family. The cofactor is Mn(2+).

It catalyses the reaction Release of any N-terminal amino acid, including proline, that is linked to proline, even from a dipeptide or tripeptide.. Catalyzes the removal of a penultimate prolyl residue from the N-termini of peptides. The polypeptide is Probable Xaa-Pro aminopeptidase P (ampp) (Neosartorya fischeri (strain ATCC 1020 / DSM 3700 / CBS 544.65 / FGSC A1164 / JCM 1740 / NRRL 181 / WB 181) (Aspergillus fischerianus)).